A 290-amino-acid polypeptide reads, in one-letter code: UPF0761 membrane protein YihY (290 aa).

Helical transmembrane passes span 44–64, 104–124, 140–160, 183–203, 210–230, and 244–264; these read LLSL…FPMF, VGAC…DSAL, FAVY…SLAI, IFPL…VPTI, AIVG…GFAL, and VLAV…IVLL.

This sequence belongs to the UPF0761 family.

Its subcellular location is the cell inner membrane. The protein is UPF0761 membrane protein YihY of Escherichia coli O7:K1 (strain IAI39 / ExPEC).